We begin with the raw amino-acid sequence, 293 residues long: Transcription elongation factor S-II (293 aa).

In terms of domain architecture, TFIIS N-terminal spans 4–81 (ADIRSAKAAL…KKWKADVSKG (78 aa)). The tract at residues 81-123 (GRPLKTTTTTSSTPSKHADVGSQAQKQVQKQSSSGQRTFKSDN) is disordered. A compositionally biased stretch (low complexity) spans 100–116 (VGSQAQKQVQKQSSSGQ). Residues 133–248 (IRNNCIGLMY…HAQGAKPQKA (116 aa)) enclose the TFIIS central domain. The TFIIS-type zinc-finger motif lies at 251–291 (DLFTCGKCKQKKVSYYQMQTRSADEPMTTFCECTVCGNRWK). Positions 255, 258, 283, and 286 each coordinate Zn(2+).

It belongs to the TFS-II family.

It localises to the nucleus. Necessary for efficient RNA polymerase II transcription elongation past template-encoded arresting sites. The arresting sites in DNA have the property of trapping a certain fraction of elongating RNA polymerases that pass through, resulting in locked ternary complexes. Cleavage of the nascent transcript by S-II allows the resumption of elongation from the new 3'-terminus. The sequence is that of Transcription elongation factor S-II (tfs1) from Schizosaccharomyces pombe (strain 972 / ATCC 24843) (Fission yeast).